The following is a 914-amino-acid chain: Origin recognition complex subunit 1 (914 aa).

Positions 48–188 (IKLGRGDSVV…PTGEKFVDIN (141 aa)) constitute a BAH domain. The interval 218 to 343 (KEIKRGPQKK…PKDPSKPRQM (126 aa)) is disordered. The segment covering 221-230 (KRGPQKKDKA) has biased composition (basic and acidic residues). At Ser237 the chain carries Phosphoserine. The segment covering 247-296 (TDNEDGNEDESSDYESPSDIDVSEDMDSGEISADELEEEEDEEEDEDEEE) has biased composition (acidic residues). Over residues 303 to 313 (NSPRKRGRKIK) the composition is skewed to basic residues. Residues Val435 and 479 to 487 (GTPGVGKTL) contribute to the ATP site. The Mg(2+) site is built by Asp566 and Glu567. ATP-binding positions include Glu567, Asn600, Arg704, and 726–733 (GYGYDGKT).

This sequence belongs to the ORC1 family. Component of the origin recognition complex (ORC) composed of at least ORC1, ORC2, ORC3, ORC4, ORC5 and ORC6. Interacts with MCM10 and TAH11.

Its subcellular location is the nucleus. Its function is as follows. Component of the origin recognition complex (ORC) that binds origins of replication. It has a role in both chromosomal replication and mating type transcriptional silencing. Binds to the ARS consensus sequence (ACS) of origins of replication. The polypeptide is Origin recognition complex subunit 1 (ORC1) (Saccharomyces cerevisiae (strain ATCC 204508 / S288c) (Baker's yeast)).